The primary structure comprises 142 residues: 3-hydroxyacyl-[acyl-carrier-protein] dehydratase FabZ (142 aa).

H48 is a catalytic residue.

The protein belongs to the thioester dehydratase family. FabZ subfamily.

It is found in the cytoplasm. The enzyme catalyses a (3R)-hydroxyacyl-[ACP] = a (2E)-enoyl-[ACP] + H2O. Involved in unsaturated fatty acids biosynthesis. Catalyzes the dehydration of short chain beta-hydroxyacyl-ACPs and long chain saturated and unsaturated beta-hydroxyacyl-ACPs. This chain is 3-hydroxyacyl-[acyl-carrier-protein] dehydratase FabZ, found in Natranaerobius thermophilus (strain ATCC BAA-1301 / DSM 18059 / JW/NM-WN-LF).